A 63-amino-acid chain; its full sequence is Large ribosomal subunit protein uL29 (63 aa).

The protein belongs to the universal ribosomal protein uL29 family.

This is Large ribosomal subunit protein uL29 from Azotobacter vinelandii (strain DJ / ATCC BAA-1303).